A 479-amino-acid chain; its full sequence is Anaerobic nitric oxide reductase flavorubredoxin (479 aa).

The zinc metallo-hydrolase stretch occupies residues 30 to 210 (LRGSSYNSYL…PFSRLVTPKI (181 aa)). 6 residues coordinate Fe cation: His79, Glu81, Asp83, His147, Asp166, and His227. A Flavodoxin-like domain is found at 254 to 393 (ITIFYDTMSN…LCREHGREIA (140 aa)). Residues 260 to 264 (TMSNN) and 342 to 369 (AFGS…EMSL) contribute to the FMN site. One can recognise a Rubredoxin-like domain in the interval 423–474 (GPRMQCSVCQWIYDPAKGEPMQDVAPGTPWSEVPDNFLCPECSLGKDVFDEL). Fe cation is bound by residues Cys428, Cys431, Cys461, and Cys464.

In the N-terminal section; belongs to the zinc metallo-hydrolase group 3 family. In terms of assembly, homotetramer. The cofactor is Fe cation. Requires FMN as cofactor.

Its subcellular location is the cytoplasm. Its pathway is nitrogen metabolism; nitric oxide reduction. Functionally, anaerobic nitric oxide reductase; uses NADH to detoxify nitric oxide (NO), protecting several 4Fe-4S NO-sensitive enzymes. Has at least 2 reductase partners, only one of which (NorW, flavorubredoxin reductase) has been identified. NO probably binds to the di-iron center; electrons enter from the NorW at rubredoxin and are transferred sequentially to the FMN center and the di-iron center. Also able to function as an aerobic oxygen reductase. This Shigella flexneri serotype 5b (strain 8401) protein is Anaerobic nitric oxide reductase flavorubredoxin.